We begin with the raw amino-acid sequence, 220 residues long: MDLAAHIDHTLLKPTATLEEVAKAAEEALEYGFYGLCIPPSYVAWVRARYPHAPFRLVTVVGFPLGYQEKEVKALEAALACARGADEVDMVLHLGRAKAGDLDYLEAEVRAVREAVPQAVLKVILETGYFSPEEIARLAEAAIRGGADFLKTSTGFGPRGASLEDVALLVRVAQGRAQVKAAGGIRDRETALRMLKAGASRLGTSSGVALVAGEGGTLGY.

Catalysis depends on D89, which acts as the Proton donor/acceptor. The Schiff-base intermediate with acetaldehyde role is filled by K151. Residue K180 is the Proton donor/acceptor of the active site.

It belongs to the DeoC/FbaB aldolase family. DeoC type 1 subfamily. As to quaternary structure, homotetramer, in solution and in the crystal structure.

Its subcellular location is the cytoplasm. It catalyses the reaction 2-deoxy-D-ribose 5-phosphate = D-glyceraldehyde 3-phosphate + acetaldehyde. Its pathway is carbohydrate degradation; 2-deoxy-D-ribose 1-phosphate degradation; D-glyceraldehyde 3-phosphate and acetaldehyde from 2-deoxy-alpha-D-ribose 1-phosphate: step 2/2. Its function is as follows. Catalyzes a reversible aldol reaction between acetaldehyde and D-glyceraldehyde 3-phosphate to generate 2-deoxy-D-ribose 5-phosphate. This is Deoxyribose-phosphate aldolase from Thermus thermophilus (strain ATCC 27634 / DSM 579 / HB8).